We begin with the raw amino-acid sequence, 139 residues long: FAD synthase (139 aa).

ATP-binding positions include 9-10, 14-17, and N92; these read TF and HPGH.

Belongs to the archaeal FAD synthase family. Homodimer. It depends on a divalent metal cation as a cofactor.

It catalyses the reaction FMN + ATP + H(+) = FAD + diphosphate. It participates in cofactor biosynthesis; FAD biosynthesis; FAD from FMN: step 1/1. Its function is as follows. Catalyzes the transfer of the AMP portion of ATP to flavin mononucleotide (FMN) to produce flavin adenine dinucleotide (FAD) coenzyme. The polypeptide is FAD synthase (Methanocella paludicola (strain DSM 17711 / JCM 13418 / NBRC 101707 / SANAE)).